The primary structure comprises 374 residues: Ferroptosis suppressor protein 1 (374 aa).

G2 carries N-myristoyl glycine lipidation. Residues 13–35 (VVIVGGGFAGIAAASQLKSFGIP) traverse the membrane as a helical segment. 6-hydroxy-FAD is bound by residues 17–21 (GGGFA), R53, and V81. Position 167 is an N6-acetyllysine (K167). D285 contacts 6-hydroxy-FAD.

It belongs to the FAD-dependent oxidoreductase family. It depends on 6-hydroxy-FAD as a cofactor. Post-translationally, N-myristoylation at Gly-2 mediates the recruitment to lipid droplets and plasma membrane. Acetylation at Lys-167 prevents AIFM2 ubiquitination and degradation, thereby inhibiting ferroptosis. KAT2B mediates acetylation at Lys-167, while HDAC3 removes it. In terms of processing, ubiquitinated. AIFM2 undergoes 'Lys-29'-ubiquitination and proteasomal degradation, which is inhibited by acetylation at Lys-167.

The protein resides in the lipid droplet. It localises to the cell membrane. The protein localises to the cytoplasm. It is found in the mitochondrion membrane. Its subcellular location is the nucleus. It carries out the reaction ubiquinone-10 + NADH + H(+) = ubiquinol-10 + NAD(+). The enzyme catalyses phylloquinone + NADH + H(+) = phylloquinol + NAD(+). The catalysed reaction is menaquinone-4 + NADH + H(+) = menaquinol-4 + NAD(+). It catalyses the reaction menadione + NADH + H(+) = menadiol + NAD(+). Its activity is regulated as follows. The modification by 4-hydroxy-2-nonenal (HNE) adduction in mitochondria results in loss of the oxidoreductase activity and activation of a novel function in mitochondrial oxidative stress signaling. An NAD(P)H-dependent oxidoreductase that acts as a key inhibitor of ferroptosis. At the plasma membrane, catalyzes reduction of coenzyme Q/ubiquinone-10 to ubiquinol-10, a lipophilic radical-trapping antioxidant that prevents lipid oxidative damage and consequently ferroptosis. Acts in parallel to GPX4 to suppress phospholipid peroxidation and ferroptosis. This anti-ferroptotic function is independent of cellular glutathione levels. Also acts as a potent radical-trapping antioxidant by mediating warfarin-resistant vitamin K reduction in the canonical vitamin K cycle: catalyzes NAD(P)H-dependent reduction of vitamin K (phylloquinone, menaquinone-4 and menadione) to hydroquinone forms. Hydroquinones act as potent radical-trapping antioxidants inhibitor of phospholipid peroxidation and ferroptosis. May play a role in mitochondrial stress signaling. Upon oxidative stress, associates with the lipid peroxidation end product 4-hydroxy-2-nonenal (HNE) forming a lipid adduct devoid of oxidoreductase activity, which then translocates from mitochondria into the nucleus triggering DNA damage and cell death. The polypeptide is Ferroptosis suppressor protein 1 (aifm2) (Xenopus laevis (African clawed frog)).